The following is a 172-amino-acid chain: Shikimate kinase (172 aa).

An ATP-binding site is contributed by 14–19 (GAGKST). Serine 18 serves as a coordination point for Mg(2+). Residues aspartate 36, arginine 60, and glycine 82 each coordinate substrate. Arginine 120 is an ATP binding site. Arginine 139 is a substrate binding site. Glutamine 156 contributes to the ATP binding site.

This sequence belongs to the shikimate kinase family. In terms of assembly, monomer. It depends on Mg(2+) as a cofactor.

Its subcellular location is the cytoplasm. The catalysed reaction is shikimate + ATP = 3-phosphoshikimate + ADP + H(+). It functions in the pathway metabolic intermediate biosynthesis; chorismate biosynthesis; chorismate from D-erythrose 4-phosphate and phosphoenolpyruvate: step 5/7. Its function is as follows. Catalyzes the specific phosphorylation of the 3-hydroxyl group of shikimic acid using ATP as a cosubstrate. In Aliivibrio fischeri (strain ATCC 700601 / ES114) (Vibrio fischeri), this protein is Shikimate kinase.